Here is a 165-residue protein sequence, read N- to C-terminus: PARP-type zinc finger-containing protein C13F5.07c (165 aa).

The PARP-type; degenerate zinc-finger motif lies at 8–100 (YRIEIAPNNR…KVVDAINEGH (93 aa)). The span at 100–114 (HVSESDERESRKLGE) shows a compositional bias: basic and acidic residues. The tract at residues 100 to 165 (HVSESDERES…TDGSEAYEDD (66 aa)) is disordered. Residues 117-128 (NVNSQKLKTSSP) show a composition bias toward polar residues. A compositionally biased stretch (basic residues) spans 131–141 (VVRKNKRHHTT). Positions 149 to 165 (SDLDAEFTDGSEAYEDD) are enriched in acidic residues.

It is found in the cytoplasm. Its subcellular location is the nucleus. In Schizosaccharomyces pombe (strain 972 / ATCC 24843) (Fission yeast), this protein is PARP-type zinc finger-containing protein C13F5.07c.